We begin with the raw amino-acid sequence, 147 residues long: Mitochondrial import receptor subunit TOM20 homolog (147 aa).

Residues Met1–Ala3 are Mitochondrial intermembrane-facing. The helical transmembrane segment at Val4–Phe26 threads the bilayer. Topologically, residues Asp27–Glu147 are cytoplasmic.

This sequence belongs to the Tom20 family. Forms part of the preprotein translocase complex of the outer mitochondrial membrane (TOM complex). Interacts with tom22.

Its subcellular location is the mitochondrion outer membrane. Its function is as follows. Central component of the receptor complex responsible for the recognition and translocation of cytosolically synthesized mitochondrial preproteins. Together with tom22 functions as the transit peptide receptor at the surface of the mitochondrion outer membrane and facilitates the movement of preproteins into the tom40 translocation pore. The chain is Mitochondrial import receptor subunit TOM20 homolog (tomm20) from Xenopus laevis (African clawed frog).